Reading from the N-terminus, the 432-residue chain is tRNA(Ile)-lysidine synthase (432 aa).

Residue 19–24 (STGIDS) participates in ATP binding.

The protein belongs to the tRNA(Ile)-lysidine synthase family.

It localises to the cytoplasm. The catalysed reaction is cytidine(34) in tRNA(Ile2) + L-lysine + ATP = lysidine(34) in tRNA(Ile2) + AMP + diphosphate + H(+). In terms of biological role, ligates lysine onto the cytidine present at position 34 of the AUA codon-specific tRNA(Ile) that contains the anticodon CAU, in an ATP-dependent manner. Cytidine is converted to lysidine, thus changing the amino acid specificity of the tRNA from methionine to isoleucine. This is tRNA(Ile)-lysidine synthase from Staphylococcus epidermidis (strain ATCC 35984 / DSM 28319 / BCRC 17069 / CCUG 31568 / BM 3577 / RP62A).